Here is a 43-residue protein sequence, read N- to C-terminus: uncharacterized protein (43 aa).

This is an uncharacterized protein from Dictyostelium discoideum (Social amoeba).